The sequence spans 219 residues: Orotate phosphoribosyltransferase (219 aa).

Residue K26 participates in 5-phospho-alpha-D-ribose 1-diphosphate binding. 34–35 (FF) provides a ligand contact to orotate. 5-phospho-alpha-D-ribose 1-diphosphate-binding positions include 72–73 (YK), R98, K99, K102, H104, and 124–132 (DDVITAGTA). 2 residues coordinate orotate: T128 and R156.

This sequence belongs to the purine/pyrimidine phosphoribosyltransferase family. PyrE subfamily. As to quaternary structure, homodimer. The cofactor is Mg(2+).

The enzyme catalyses orotidine 5'-phosphate + diphosphate = orotate + 5-phospho-alpha-D-ribose 1-diphosphate. It functions in the pathway pyrimidine metabolism; UMP biosynthesis via de novo pathway; UMP from orotate: step 1/2. Its function is as follows. Catalyzes the transfer of a ribosyl phosphate group from 5-phosphoribose 1-diphosphate to orotate, leading to the formation of orotidine monophosphate (OMP). This is Orotate phosphoribosyltransferase from Xylella fastidiosa (strain 9a5c).